We begin with the raw amino-acid sequence, 314 residues long: Homoserine kinase (314 aa).

Proline 95–serine 105 provides a ligand contact to ATP.

The protein belongs to the GHMP kinase family. Homoserine kinase subfamily.

Its subcellular location is the cytoplasm. The catalysed reaction is L-homoserine + ATP = O-phospho-L-homoserine + ADP + H(+). It functions in the pathway amino-acid biosynthesis; L-threonine biosynthesis; L-threonine from L-aspartate: step 4/5. Catalyzes the ATP-dependent phosphorylation of L-homoserine to L-homoserine phosphate. The protein is Homoserine kinase of Mycobacterium ulcerans (strain Agy99).